The following is a 339-amino-acid chain: Protein RecA (339 aa).

73 to 80 is an ATP binding site; that stretch reads GPESSGKT.

The protein belongs to the RecA family.

The protein resides in the cytoplasm. In terms of biological role, can catalyze the hydrolysis of ATP in the presence of single-stranded DNA, the ATP-dependent uptake of single-stranded DNA by duplex DNA, and the ATP-dependent hybridization of homologous single-stranded DNAs. It interacts with LexA causing its activation and leading to its autocatalytic cleavage. The polypeptide is Protein RecA (Mycoplasmopsis pulmonis (strain UAB CTIP) (Mycoplasma pulmonis)).